The primary structure comprises 867 residues: Glutamate receptor 1.2 (867 aa).

The signal sequence occupies residues M1–A27. Topologically, residues S28 to T560 are extracellular. N-linked (GlcNAc...) asparagine glycans are attached at residues N301, N400, N496, and N499. The helical transmembrane segment at P561 to I581 threads the bilayer. Topologically, residues E582–Q590 are cytoplasmic. A helical transmembrane segment spans residues G591–A611. The Cytoplasmic segment spans residues H612–R622. The helical transmembrane segment at F623–L643 threads the bilayer. Residues T644–G792 lie on the Extracellular side of the membrane. 4 N-linked (GlcNAc...) asparagine glycosylation sites follow: N676, N688, N699, and N748. The helical transmembrane segment at L793–L813 threads the bilayer. Residues R814–R867 lie on the Cytoplasmic side of the membrane.

Belongs to the glutamate-gated ion channel (TC 1.A.10.1) family. May form heteromers. Expressed predominantly in roots and siliques.

The protein localises to the membrane. In terms of biological role, glutamate-gated receptor that probably acts as a non-selective cation channel. May be involved in light-signal transduction and calcium homeostasis via the regulation of calcium influx into cells. The chain is Glutamate receptor 1.2 (GLR1.2) from Arabidopsis thaliana (Mouse-ear cress).